A 353-amino-acid chain; its full sequence is (S)-8-amino-7-oxononanoate synthase BioU (353 aa).

NAD(+) is bound at residue 10 to 14 (GTGGI). The Nucleophile role is filled by Lys147. At Lys147 the chain carries Allysine. 214 to 215 (GT) serves as a coordination point for NAD(+). Glu218 functions as the Proton acceptor in the catalytic mechanism. The active-site Proton donor and proton acceptor is His222.

This sequence belongs to the BioU family. Monomer.

It catalyses the reaction (8S)-8-amino-7-oxononanoate + L-lysyl-[protein] + CO2 = (S)-2-amino-6-oxohexanoyl-[protein] + (7R,8S)-8-amino-7-(carboxyamino)nonanoate + 2 H(+). It carries out the reaction (8S)-8-amino-7-oxononanoate + L-lysyl-[protein] + NADPH + H(+) = N(6)-[(2S,3R)-2-amino-8-carboxyoctan-3-yl]-L-lysyl-[protein] + NADP(+) + H2O. The catalysed reaction is N(6)-[(2S,3R)-2-amino-8-carboxyoctan-3-yl]-L-lysyl-[protein] + CO2 + NADP(+) + H2O = (S)-2-amino-6-oxohexanoyl-[protein] + (7R,8S)-8-amino-7-(carboxyamino)nonanoate + NADPH + 3 H(+). The enzyme catalyses (8S)-8-amino-7-oxononanoate + L-lysyl-[protein] + NADH + H(+) = N(6)-[(2S,3R)-2-amino-8-carboxyoctan-3-yl]-L-lysyl-[protein] + NAD(+) + H2O. It catalyses the reaction N(6)-[(2S,3R)-2-amino-8-carboxyoctan-3-yl]-L-lysyl-[protein] + CO2 + NAD(+) + H2O = (S)-2-amino-6-oxohexanoyl-[protein] + (7R,8S)-8-amino-7-(carboxyamino)nonanoate + NADH + 3 H(+). Its pathway is cofactor biosynthesis; biotin biosynthesis. Functionally, a 'suicide' enzyme that participates in biotin synthesis. Catalyzes the formation of (S)-8-amino-7-oxononanoate (DAN-carbamic acid) from (7R,8S)-8-amino-7-(carboxyamino)nonanoate (DAN), a function equivalent to the cannonical BioA reaction and the first half-reaction of BioD. The cellular requirement for biotin is thought be low enough that this single turnover enzyme supplies a sufficient amount of the cofactor. Overall it catalyzes three reactions: formation of a covalent linkage with 8-amino-7-oxononanoate to yield a BioU-DAN conjugate at the epsilon-amino group of Lys124 of BioU using NAD(P)H, carboxylation of the conjugate to form BioU-DAN-carbamic acid, and release of DAN-carbamic acid using NAD(P)+. Complements a bioA deletion in E.coli. This is (S)-8-amino-7-oxononanoate synthase BioU from Haloferax mediterranei (strain ATCC 33500 / DSM 1411 / JCM 8866 / NBRC 14739 / NCIMB 2177 / R-4) (Halobacterium mediterranei).